A 532-amino-acid chain; its full sequence is Probable bifunctional tRNA threonylcarbamoyladenosine biosynthesis protein (532 aa).

Residues 1-323 are kae1; the sequence is MRVLGVEGTA…FRPDEVSVTW (323 aa). Positions 107 and 111 each coordinate Fe cation. L-threonylcarbamoyladenylate contacts are provided by residues 128–132, Asp-160, Gly-173, Glu-177, and Asn-256; that span reads NASGA. Asp-284 lines the Fe cation pocket. Residues 329–532 form the Protein kinase domain; that stretch reads PARDPGADAV…GRYQDDPETA (204 aa). Residues 338-346 and Lys-355 contribute to the ATP site; that span reads VRQGAEATV. Asp-444 acts as the Proton acceptor; for kinase activity in catalysis.

It in the N-terminal section; belongs to the KAE1 / TsaD family. This sequence in the C-terminal section; belongs to the protein kinase superfamily. Tyr protein kinase family. BUD32 subfamily. In terms of assembly, component of the KEOPS complex that consists of Kae1, Bud32, Cgi121 and Pcc1; the whole complex dimerizes. The cofactor is Fe(2+).

Its subcellular location is the cytoplasm. The enzyme catalyses L-seryl-[protein] + ATP = O-phospho-L-seryl-[protein] + ADP + H(+). The catalysed reaction is L-threonyl-[protein] + ATP = O-phospho-L-threonyl-[protein] + ADP + H(+). It catalyses the reaction L-threonylcarbamoyladenylate + adenosine(37) in tRNA = N(6)-L-threonylcarbamoyladenosine(37) in tRNA + AMP + H(+). Required for the formation of a threonylcarbamoyl group on adenosine at position 37 (t(6)A37) in tRNAs that read codons beginning with adenine. Is a component of the KEOPS complex that is probably involved in the transfer of the threonylcarbamoyl moiety of threonylcarbamoyl-AMP (TC-AMP) to the N6 group of A37. The Kae1 domain likely plays a direct catalytic role in this reaction. The Bud32 domain probably displays kinase activity that regulates Kae1 function. The protein is Probable bifunctional tRNA threonylcarbamoyladenosine biosynthesis protein of Halobacterium salinarum (strain ATCC 700922 / JCM 11081 / NRC-1) (Halobacterium halobium).